The primary structure comprises 550 residues: Chaperonin GroEL (550 aa).

Residues Thr-30–Pro-33, Lys-51, Asp-87–Thr-91, Gly-415, Asn-479–Ala-481, and Asp-495 contribute to the ATP site.

It belongs to the chaperonin (HSP60) family. In terms of assembly, forms a cylinder of 14 subunits composed of two heptameric rings stacked back-to-back. Interacts with the co-chaperonin GroES.

It is found in the cytoplasm. The enzyme catalyses ATP + H2O + a folded polypeptide = ADP + phosphate + an unfolded polypeptide.. Together with its co-chaperonin GroES, plays an essential role in assisting protein folding. The GroEL-GroES system forms a nano-cage that allows encapsulation of the non-native substrate proteins and provides a physical environment optimized to promote and accelerate protein folding. This is Chaperonin GroEL from Aromatoleum aromaticum (strain DSM 19018 / LMG 30748 / EbN1) (Azoarcus sp. (strain EbN1)).